Here is a 375-residue protein sequence, read N- to C-terminus: Filamin-binding LIM protein 1 (375 aa).

The segment at 1 to 70 (MASKPEKRVA…SPWTPPGRAA (70 aa)) is filamin-binding. Disordered stretches follow at residues 43-119 (WEAP…PSEE) and 137-176 (HLSP…AERV). Pro residues-rich tracts occupy residues 104–114 (FPPPPPPPPVL) and 140–149 (PPLPPPPPQA). The segment covering 150–159 (PAERPSVQPS) has biased composition (low complexity). 3 LIM zinc-binding domains span residues 183–244 (DICA…TLER), 245–302 (CGKC…RKFA), and 303–372 (PVCS…RSAA). Residues 278 to 375 (IGDESFALGS…HVKRSAAGCC (98 aa)) form an FERMT2-binding region.

In terms of assembly, interacts with FERMT2, FLNA, FLNB and FLNC. Interacts with NKX2-5.

The protein localises to the cell junction. Its subcellular location is the focal adhesion. It is found in the cytoplasm. The protein resides in the cytoskeleton. It localises to the stress fiber. Functionally, serves as an anchoring site for cell-ECM adhesion proteins and filamin-containing actin filaments. Is implicated in cell shape modulation (spreading) and motility. May participate in the regulation of filamin-mediated cross-linking and stabilization of actin filaments. May also regulate the assembly of filamin-containing signaling complexes that control actin assembly. Promotes dissociation of FLNA from ITGB3 and ITGB7. Promotes activation of integrins and regulates integrin-mediated cell-cell adhesion. The polypeptide is Filamin-binding LIM protein 1 (FBLIM1) (Pongo abelii (Sumatran orangutan)).